The following is a 326-amino-acid chain: Metal-binding protein YtgA (326 aa).

A signal peptide spans 1–21 (MFFLHVRKYKHVIGGLLCLAG). Fe(2+)-binding residues include His-75, His-141, His-207, and Asp-299.

It belongs to the bacterial solute-binding protein 9 family. Monomer.

It is found in the periplasm. In terms of biological role, part of the ATP-binding cassette (ABC) transport system YtgABCD involved in metal import. Binds Fe(2+), Mn(2+) and Ni(2+), with a preference for Fe(2+) and delivers them to the membrane permease for translocation into the cytoplasm. In Chlamydia muridarum (strain MoPn / Nigg), this protein is Metal-binding protein YtgA.